Here is a 1770-residue protein sequence, read N- to C-terminus: Transposon Ty2-F Gag-Pol polyprotein (1770 aa).

Polar residues-rich tracts occupy residues 1-11 (MESQQLHQNPH), 19-39 (ASVT…SASN), and 49-60 (KVNSQQETTPGT). 2 disordered regions span residues 1–86 (MESQ…GQYQ) and 359–453 (QHSE…LPDH). Residues 295-397 (ENNINVSDRL…SSKPRAAKAH (103 aa)) are RNA-binding. Positions 369–381 (TSPNTTNTKVTTR) are enriched in low complexity. Polar residues-rich tracts occupy residues 399-408 (IATSSKFSRV) and 415-435 (ESTV…GQQQ). The active-site For protease activity; shared with dimeric partner is the Asp457. Residues 579–636 (NVNKSKSVNKYPYPLIHRMLGHANFRSIQKSLKKNAVTYLKESDIEWSNASTYQCPDC) are integrase-type zinc finger-like. One can recognise an Integrase catalytic domain in the interval 656 to 831 (ESYEPFQYLH…AGLDITTILP (176 aa)). Mg(2+)-binding residues include Asp667 and Asp732. Disordered regions lie at residues 1004-1034 (MGGT…STNE), 1059-1135 (TEEP…KSSK), 1146-1165 (LPLP…VSKD), and 1170-1205 (HSRQ…TEIE). 2 stretches are compositionally biased toward polar residues: residues 1009–1034 (ESDT…STNE) and 1065–1082 (QRNS…STPS). The segment covering 1151-1165 (LTHKSPTDTSDVSKD) has biased composition (basic and acidic residues). A Bipartite nuclear localization signal motif is present at residues 1193 to 1227 (KKRSLEDNETEIEVSRDTWNNKNMRSLEPPRSKKR). The Reverse transcriptase Ty1/copia-type domain occupies 1353-1491 (NDYYITQLDI…DILGLEIKYQ (139 aa)). The Mg(2+) site is built by Asp1361, Asp1442, Asp1443, Asp1625, Glu1667, and Asp1700. The RNase H Ty1/copia-type domain occupies 1625-1767 (DASYGNQPYY…IKTFKLLTNK (143 aa)).

The capsid protein forms a homotrimer, from which the VLPs are assembled. The protease is a homodimer, whose active site consists of two apposed aspartic acid residues. In terms of processing, initially, virus-like particles (VLPs) are composed of the structural unprocessed proteins Gag and Gag-Pol, and also contain the host initiator methionine tRNA (tRNA(i)-Met) which serves as a primer for minus-strand DNA synthesis, and a dimer of genomic Ty RNA. Processing of the polyproteins occurs within the particle and proceeds by an ordered pathway, called maturation. First, the protease (PR) is released by autocatalytic cleavage of the Gag-Pol polyprotein, and this cleavage is a prerequisite for subsequent processing at the remaining sites to release the mature structural and catalytic proteins. Maturation takes place prior to the RT reaction and is required to produce transposition-competent VLPs.

The protein localises to the cytoplasm. It localises to the nucleus. The catalysed reaction is DNA(n) + a 2'-deoxyribonucleoside 5'-triphosphate = DNA(n+1) + diphosphate. It carries out the reaction Endonucleolytic cleavage to 5'-phosphomonoester.. Its function is as follows. Capsid protein (CA) is the structural component of the virus-like particle (VLP), forming the shell that encapsulates the retrotransposons dimeric RNA genome. The particles are assembled from trimer-clustered units and there are holes in the capsid shells that allow for the diffusion of macromolecules. CA also has nucleocapsid-like chaperone activity, promoting primer tRNA(i)-Met annealing to the multipartite primer-binding site (PBS), dimerization of Ty2 RNA and initiation of reverse transcription. In terms of biological role, the aspartyl protease (PR) mediates the proteolytic cleavages of the Gag and Gag-Pol polyproteins after assembly of the VLP. Reverse transcriptase/ribonuclease H (RT) is a multifunctional enzyme that catalyzes the conversion of the retro-elements RNA genome into dsDNA within the VLP. The enzyme displays a DNA polymerase activity that can copy either DNA or RNA templates, and a ribonuclease H (RNase H) activity that cleaves the RNA strand of RNA-DNA heteroduplexes during plus-strand synthesis and hydrolyzes RNA primers. The conversion leads to a linear dsDNA copy of the retrotransposon that includes long terminal repeats (LTRs) at both ends. Functionally, integrase (IN) targets the VLP to the nucleus, where a subparticle preintegration complex (PIC) containing at least integrase and the newly synthesized dsDNA copy of the retrotransposon must transit the nuclear membrane. Once in the nucleus, integrase performs the integration of the dsDNA into the host genome. The protein is Transposon Ty2-F Gag-Pol polyprotein (TY2B-F) of Saccharomyces cerevisiae (strain ATCC 204508 / S288c) (Baker's yeast).